The sequence spans 202 residues: Holliday junction resolvase RecU (202 aa).

Residues threonine 85, aspartate 87, glutamate 100, and glutamine 119 each contribute to the Mg(2+) site.

The protein belongs to the RecU family. Mg(2+) is required as a cofactor.

Its subcellular location is the cytoplasm. The enzyme catalyses Endonucleolytic cleavage at a junction such as a reciprocal single-stranded crossover between two homologous DNA duplexes (Holliday junction).. Endonuclease that resolves Holliday junction intermediates in genetic recombination. Cleaves mobile four-strand junctions by introducing symmetrical nicks in paired strands. Promotes annealing of linear ssDNA with homologous dsDNA. Required for DNA repair, homologous recombination and chromosome segregation. The polypeptide is Holliday junction resolvase RecU (Streptococcus equi subsp. zooepidemicus (strain H70)).